We begin with the raw amino-acid sequence, 372 residues long: Glutamate 5-kinase (372 aa).

Lysine 14 contributes to the ATP binding site. The substrate site is built by serine 54, aspartate 141, and asparagine 153. 173 to 174 (TD) contributes to the ATP binding site. A PUA domain is found at 280–358 (RGTLVLDAGA…EAIESILGYS (79 aa)).

The protein belongs to the glutamate 5-kinase family.

The protein resides in the cytoplasm. It carries out the reaction L-glutamate + ATP = L-glutamyl 5-phosphate + ADP. It functions in the pathway amino-acid biosynthesis; L-proline biosynthesis; L-glutamate 5-semialdehyde from L-glutamate: step 1/2. Catalyzes the transfer of a phosphate group to glutamate to form L-glutamate 5-phosphate. In Pseudomonas putida (strain ATCC 700007 / DSM 6899 / JCM 31910 / BCRC 17059 / LMG 24140 / F1), this protein is Glutamate 5-kinase.